A 217-amino-acid chain; its full sequence is GTP cyclohydrolase 1 (217 aa).

Zn(2+) contacts are provided by cysteine 109, histidine 112, and cysteine 180.

The protein belongs to the GTP cyclohydrolase I family. In terms of assembly, toroid-shaped homodecamer, composed of two pentamers of five dimers.

The enzyme catalyses GTP + H2O = 7,8-dihydroneopterin 3'-triphosphate + formate + H(+). It functions in the pathway cofactor biosynthesis; 7,8-dihydroneopterin triphosphate biosynthesis; 7,8-dihydroneopterin triphosphate from GTP: step 1/1. This is GTP cyclohydrolase 1 from Vibrio parahaemolyticus serotype O3:K6 (strain RIMD 2210633).